Consider the following 546-residue polypeptide: MHRWTVFNEEINGNLVRVRPVGSVCHGIEFDEMACASVKSSTHNSLWRISEPGALQATNWESEHGFGSCVIDSSKDTPCRQGRIPYYAVMAQTPQHIQTAIQFARHHNLRVAIRNTGHDAIGRSSGRGSLQINVSGLKGIHFLDDFIPQGGYESQGQAVTVGAGVLGIELLTASRIQGVNVVTGTCSSVAATGGYLQGGGTSMLGPAYGMASDNALEFHVITAMGDTIVVNQYQNTDLFWSLRGGGGGTFGVVVNTTIRTFPDVPAVHFLLSSTIHRDTETSLDAEQSLWEITAEIAKLLPDLKRFNNATSSIIVPIRMEDRVTVTAEILLVNTSDIHSAGTYFTRLIKTLDSQGFPYTSNLTLYPQLSTYLSQQRVLDRAGYGIIEGSVLVSEDLFFHPDGISDIMLVLSSLQLEVGDSVEIFMCAGGQVKANKGRVTTALLPTWREAVLLLTIRRTLPPSSMIQRMRNSQLPRLRSLESPYLGSYLNVADPDEPDFRKAFWGDHYSRLYQIKHDRDPNGLFIVRIGVGSEDWDMDGICQFSKMQ.

Positions 81–263 (QGRIPYYAVM…VNTTIRTFPD (183 aa)) constitute an FAD-binding PCMH-type domain.

Belongs to the oxygen-dependent FAD-linked oxidoreductase family.

Functionally, nonribosomal peptide synthetase that mediates the biosynthesis of usterphenyllins and uscandidusins, p-terphenyl derivatives. The function of ucdF within the pathway still remains to be determined. UcdE further prenylates position C-14 of ring C of usterphenyllin B to form usterphenyllin A. The pathway begin with the biosynthesis of 4-hydroxyphenylpyruvate (HPPA) from L-tyrosine, possibly by the aminotransferase ucdG. The nonribosomal peptide synthetase ucdA then condenses two HPPA units to produce atromentin. The key step in this pathway is the reduction and dehydration of atromentin to form a terphenyl triol intermediate, performed by the NAD-dependent dehydrogenase ucdB. Further O-methylation by the methyltransferase ucdC forms terphenyllin carrying two methoxy moieties at C-9 and C-12, and subsequent dihydroxylation at C-3 of ring A and C-15 of ring C by the flavin-dependent oxygenase ucdD leads to 3,15-dihydroxyterphenyllin. Prenylation by ucdE at position C-5 of ring A forms usterphenyllin B, and is followed by a second prenylation at position C-14 of ring C to form usterphenyllin A. The following furan ring formation that leads to uscandidusins A and B was proven to be an unexpected spontaneous non-enzymatic reaction. This chain is Flavin-dependent oxygenase ucdF, found in Aspergillus ustus.